A 486-amino-acid chain; its full sequence is N-succinylglutamate 5-semialdehyde dehydrogenase (486 aa).

NAD(+) is bound at residue 220-225 (GSSRTG). Residues glutamate 243 and cysteine 277 contribute to the active site.

It belongs to the aldehyde dehydrogenase family. AstD subfamily.

It catalyses the reaction N-succinyl-L-glutamate 5-semialdehyde + NAD(+) + H2O = N-succinyl-L-glutamate + NADH + 2 H(+). Its pathway is amino-acid degradation; L-arginine degradation via AST pathway; L-glutamate and succinate from L-arginine: step 4/5. In terms of biological role, catalyzes the NAD-dependent reduction of succinylglutamate semialdehyde into succinylglutamate. The chain is N-succinylglutamate 5-semialdehyde dehydrogenase from Shewanella woodyi (strain ATCC 51908 / MS32).